A 309-amino-acid polypeptide reads, in one-letter code: Mas-related G-protein coupled receptor member E (309 aa).

At Met-1 to Thr-21 the chain is on the extracellular side. Asn-19 carries N-linked (GlcNAc...) asparagine glycosylation. A helical membrane pass occupies residues Ile-22–Trp-42. Over Leu-43 to Asp-59 the chain is Cytoplasmic. The helical transmembrane segment at Val-60–Leu-80 threads the bilayer. At Gln-81 to His-91 the chain is on the extracellular side. The chain crosses the membrane as a helical span at residues Ile-92–Ile-112. At Ser-113–Arg-132 the chain is on the cytoplasmic side. Residues Tyr-133–Leu-153 form a helical membrane-spanning segment. Residues Ser-154–Leu-168 are Extracellular-facing. A helical transmembrane segment spans residues Cys-169–Val-189. Residues Thr-190–Thr-212 are Cytoplasmic-facing. The helical transmembrane segment at Leu-213–Leu-233 threads the bilayer. Topologically, residues Ser-234 to His-247 are extracellular. Asn-236 carries an N-linked (GlcNAc...) asparagine glycan. A helical transmembrane segment spans residues Phe-248 to Gly-268. Residues Ser-269–Val-309 are Cytoplasmic-facing.

Belongs to the G-protein coupled receptor 1 family. Mas subfamily.

The protein localises to the cell membrane. Functionally, orphan receptor. May regulate nociceptor function and/or development, including the sensation or modulation of pain. This is Mas-related G-protein coupled receptor member E (Mrgpre) from Rattus norvegicus (Rat).